A 563-amino-acid polypeptide reads, in one-letter code: O-fucosyltransferase 14 (563 aa).

The segment covering M1–S16 has biased composition (low complexity). The tract at residues M1–N25 is disordered. The helical; Signal-anchor for type II membrane protein transmembrane segment at I73 to Y93 threads the bilayer. Residues N135, N140, and N339 are each glycosylated (N-linked (GlcNAc...) asparagine). Substrate is bound by residues H412–R414 and T528–F529.

Belongs to the glycosyltransferase GT106 family.

The protein localises to the membrane. Its pathway is glycan metabolism. This is O-fucosyltransferase 14 from Arabidopsis thaliana (Mouse-ear cress).